The following is a 218-amino-acid chain: Octanoyltransferase (218 aa).

The BPL/LPL catalytic domain maps to 32–218 (GEAAEAIWLL…LRTFPQHFPD (187 aa)). Residues 71–78 (RGGQYTYH), 151–153 (AIG), and 164–166 (GLS) contribute to the substrate site. Cysteine 182 serves as the catalytic Acyl-thioester intermediate.

It belongs to the LipB family.

It localises to the cytoplasm. It catalyses the reaction octanoyl-[ACP] + L-lysyl-[protein] = N(6)-octanoyl-L-lysyl-[protein] + holo-[ACP] + H(+). It functions in the pathway protein modification; protein lipoylation via endogenous pathway; protein N(6)-(lipoyl)lysine from octanoyl-[acyl-carrier-protein]: step 1/2. In terms of biological role, catalyzes the transfer of endogenously produced octanoic acid from octanoyl-acyl-carrier-protein onto the lipoyl domains of lipoate-dependent enzymes. Lipoyl-ACP can also act as a substrate although octanoyl-ACP is likely to be the physiological substrate. The chain is Octanoyltransferase from Cereibacter sphaeroides (strain ATCC 17023 / DSM 158 / JCM 6121 / CCUG 31486 / LMG 2827 / NBRC 12203 / NCIMB 8253 / ATH 2.4.1.) (Rhodobacter sphaeroides).